A 969-amino-acid polypeptide reads, in one-letter code: RNA polymerase-associated protein RapA (969 aa).

The 178-residue stretch at 162–339 folds into the Helicase ATP-binding domain; that stretch reads EVGQRVAPRV…FARLALLDAD (178 aa). An ATP-binding site is contributed by 175-182; it reads DEVGLGKT. The DEAH box signature appears at 285–288; sequence DEAH. A Helicase C-terminal domain is found at 492 to 663; sequence RIEWLITFLK…IFLKNPQAVG (172 aa).

The protein belongs to the SNF2/RAD54 helicase family. RapA subfamily. Interacts with the RNAP. Has a higher affinity for the core RNAP than for the holoenzyme. Its ATPase activity is stimulated by binding to RNAP.

Functionally, transcription regulator that activates transcription by stimulating RNA polymerase (RNAP) recycling in case of stress conditions such as supercoiled DNA or high salt concentrations. Probably acts by releasing the RNAP, when it is trapped or immobilized on tightly supercoiled DNA. Does not activate transcription on linear DNA. Probably not involved in DNA repair. In Actinobacillus pleuropneumoniae serotype 3 (strain JL03), this protein is RNA polymerase-associated protein RapA.